Reading from the N-terminus, the 1804-residue chain is Collagen alpha-1(XI) chain (1804 aa).

The N-terminal stretch at methionine 1–glycine 34 is a signal peptide. The propeptide at alanine 35–glutamate 511 is N-terminal propeptide. 2 disulfide bridges follow: cysteine 60/cysteine 242 and cysteine 181/cysteine 235. The Laminin G-like domain occupies aspartate 70–cysteine 242. Residues lysine 229–histidine 417 form a nonhelical region region. An N-linked (GlcNAc...) asparagine glycan is attached at asparagine 351. The tract at residues glycine 418 to threonine 506 is triple-helical region (interrupted). Positions leucine 437–threonine 506 are disordered. A Collagen-like 1 domain is found at glycine 440–glycine 488. Low complexity-rich tracts occupy residues proline 447–aspartate 465 and leucine 477–proline 494. The segment at isoleucine 507–alanine 509 is short nonhelical segment. The tract at residues glutamine 510–glycine 527 is telopeptide. The segment at arginine 526–glutamine 1560 is disordered. Residues proline 528–valine 1540 are triple-helical region. Collagen-like domains lie at glycine 530–glycine 584, glycine 581–proline 639, proline 607–proline 664, and glycine 641–glycine 698. Gly residues-rich tracts occupy residues glycine 539–glycine 548 and glycine 581–glycine 590. At lysine 610 the chain carries Allysine. A compositionally biased stretch (low complexity) spans proline 639–arginine 655. The span at glutamine 697–proline 708 shows a compositional bias: pro residues. The span at glutamine 715–alanine 726 shows a compositional bias: low complexity. In terms of domain architecture, Collagen-like 6 spans glycine 746–proline 804. Residues arginine 805 to lysine 814 are compositionally biased toward basic and acidic residues. 3 stretches are compositionally biased toward low complexity: residues lysine 873 to lysine 901, arginine 916 to valine 925, and proline 969 to isoleucine 979. The span at glycine 1040–glycine 1049 shows a compositional bias: gly residues. A compositionally biased stretch (pro residues) spans arginine 1074 to proline 1083. Positions alanine 1084–valine 1108 are enriched in low complexity. Positions glycine 1160–glycine 1169 are enriched in gly residues. Pro residues-rich tracts occupy residues methionine 1216 to proline 1227 and glutamine 1341 to arginine 1360. Low complexity-rich tracts occupy residues alanine 1383–proline 1392 and glutamine 1417–aspartate 1426. 3 Collagen-like domains span residues glycine 1391–glutamate 1449, glycine 1442–alanine 1492, and glycine 1481–glutamate 1539. Residues proline 1428–leucine 1437 show a composition bias toward pro residues. Lysine 1450 is subject to Allysine. Over residues proline 1453 to proline 1462 the composition is skewed to low complexity. The segment covering glycine 1481–glycine 1490 has biased composition (gly residues). Positions proline 1491–alanine 1507 are enriched in pro residues. Residues proline 1509–threonine 1519 are compositionally biased toward low complexity. A compositionally biased stretch (pro residues) spans proline 1528–proline 1537. The tract at residues isoleucine 1541–alanine 1561 is nonhelical region (C-terminal). The propeptide at aspartate 1562–glycine 1804 is C-terminal propeptide. One can recognise a Fibrillar collagen NC1 domain in the interval glutamate 1575–leucine 1803. A disulfide bond links cysteine 1605 and cysteine 1637. Residues aspartate 1623, asparagine 1625, glutamine 1626, cysteine 1628, and aspartate 1631 each coordinate Ca(2+). N-linked (GlcNAc...) asparagine glycosylation is found at asparagine 1638 and asparagine 1707. 2 disulfides stabilise this stretch: cysteine 1646/cysteine 1801 and cysteine 1712/cysteine 1755.

Belongs to the fibrillar collagen family. In terms of assembly, trimers composed of three different chains: alpha 1(XI), alpha 2(XI), and alpha 3(XI). Alpha 3(XI) is probably a post-translational modification of alpha 1(II). Post-translationally, prolines at the third position of the tripeptide repeating unit (G-X-Y) are hydroxylated in some or all of the chains. N-glycosylated.

The protein resides in the secreted. It localises to the extracellular space. It is found in the extracellular matrix. Functionally, may play an important role in fibrillogenesis by controlling lateral growth of collagen II fibrils. This Rattus norvegicus (Rat) protein is Collagen alpha-1(XI) chain (Col11a1).